A 107-amino-acid chain; its full sequence is Nucleoid-associated protein Daro_0807 (107 aa).

This sequence belongs to the YbaB/EbfC family. Homodimer.

It is found in the cytoplasm. It localises to the nucleoid. Binds to DNA and alters its conformation. May be involved in regulation of gene expression, nucleoid organization and DNA protection. This Dechloromonas aromatica (strain RCB) protein is Nucleoid-associated protein Daro_0807.